The primary structure comprises 462 residues: Nitrate/nitrite transporter NarU (462 aa).

At 1 to 35 the chain is on the cytoplasmic side; that stretch reads MALQNEKNSRYLLRDWKPENPAFWENKGKHIARRN. The chain crosses the membrane as a helical span at residues 36–56; sequence LWISVSCLLLAFCVWMLFSAV. Residues 57–76 are Periplasmic-facing; sequence TVNLNKIGFNFTTDQLFLLT. A helical membrane pass occupies residues 77-97; the sequence is ALPSVSGALLRVPYSFMVPIF. Over 98 to 101 the chain is Cytoplasmic; it reads GGRR. Residues 102 to 122 form a helical membrane-spanning segment; sequence WTVFSTAILIIPCVWLGIAVQ. Over 123–125 the chain is Periplasmic; the sequence is NPN. A helical transmembrane segment spans residues 126–146; it reads TPFGIFIVIALLCGFAGANFA. At 147–180 the chain is on the cytoplasmic side; the sequence is SSMGNISFFFPKAKQGSALGINGGLGNLGVSVMQ. Residues 181–201 form a helical membrane-spanning segment; the sequence is LVAPLVIFVPVFAFLGVNGVP. Residues 202–206 lie on the Periplasmic side of the membrane; that stretch reads QADGS. The chain crosses the membrane as a helical span at residues 207–227; sequence VMSLANAAWIWVPLLAIATIA. The Cytoplasmic portion of the chain corresponds to 228-258; sequence AWSGMNDIASSRASIADQLPVLQRLHLWLLS. A helical membrane pass occupies residues 259–279; the sequence is LLYLATFGSFIGFSAGFAMLA. Topologically, residues 280 to 287 are periplasmic; that stretch reads KTQFPDVN. The helical transmembrane segment at 288–308 threads the bilayer; sequence ILRLAFFGPFIGAIARSVGGA. The Cytoplasmic portion of the chain corresponds to 309 to 317; sequence ISDKFGGVR. Residues 318-338 traverse the membrane as a helical segment; it reads VTLINFIFMAIFSALLFLTLP. Topologically, residues 339–344 are periplasmic; that stretch reads GTGSGN. The helical transmembrane segment at 345 to 365 threads the bilayer; sequence FIAFYAVFMGLFLTAGLGSGS. Residues 366–401 are Cytoplasmic-facing; sequence TFQMIAVIFRQITIYRVKMKGGSDEQAHKEAVTETA. Residues 402 to 422 traverse the membrane as a helical segment; it reads AALGFISAIGAVGGFFIPQAF. The Periplasmic segment spans residues 423–432; it reads GMSLNMTGSP. A helical membrane pass occupies residues 433-453; the sequence is VGAMKVFLIFYIVCVLLTWLV. Over 454–462 the chain is Cytoplasmic; it reads YGRRKFSQK.

It belongs to the major facilitator superfamily. Nitrate/nitrite porter (TC 2.A.1.8) family.

The protein resides in the cell inner membrane. Functionally, catalyzes nitrate uptake, nitrite uptake and nitrite export across the cytoplasmic membrane. May function as a nitrate/H(+) and nitrite/H(+) channel. Could confer a selective advantage during severe nutrient starvation or slow growth. The polypeptide is Nitrate/nitrite transporter NarU (narU) (Escherichia coli (strain K12)).